Here is a 256-residue protein sequence, read N- to C-terminus: Pimeloyl-[acyl-carrier protein] methyl ester esterase (256 aa).

The AB hydrolase-1 domain maps to 15-242 (HLVLLHGWGL…AAHAPFISHP (228 aa)). Substrate is bound by residues Trp22, 82–83 (SL), and 143–147 (FLALQ). The active-site Nucleophile is the Ser82. Residues Asp207 and His235 contribute to the active site. A substrate-binding site is contributed by His235.

Belongs to the AB hydrolase superfamily. Carboxylesterase BioH family. In terms of assembly, monomer.

The protein localises to the cytoplasm. It carries out the reaction 6-carboxyhexanoyl-[ACP] methyl ester + H2O = 6-carboxyhexanoyl-[ACP] + methanol + H(+). It functions in the pathway cofactor biosynthesis; biotin biosynthesis. Its function is as follows. The physiological role of BioH is to remove the methyl group introduced by BioC when the pimeloyl moiety is complete. It allows to synthesize pimeloyl-ACP via the fatty acid synthetic pathway through the hydrolysis of the ester bonds of pimeloyl-ACP esters. The sequence is that of Pimeloyl-[acyl-carrier protein] methyl ester esterase from Escherichia coli O6:K15:H31 (strain 536 / UPEC).